We begin with the raw amino-acid sequence, 172 residues long: 6,7-dimethyl-8-ribityllumazine synthase (172 aa).

Residues phenylalanine 24, 58-60 (ALE), and 82-84 (AVI) contribute to the 5-amino-6-(D-ribitylamino)uracil site. 87-88 (ET) contacts (2S)-2-hydroxy-3-oxobutyl phosphate. The Proton donor role is filled by histidine 90. Asparagine 115 lines the 5-amino-6-(D-ribitylamino)uracil pocket. Arginine 129 serves as a coordination point for (2S)-2-hydroxy-3-oxobutyl phosphate. Positions 150–172 (ALEQLDGDEDDEGEGEDDEEERA) are disordered. Residues 154 to 172 (LDGDEDDEGEGEDDEEERA) show a composition bias toward acidic residues.

The protein belongs to the DMRL synthase family.

It carries out the reaction (2S)-2-hydroxy-3-oxobutyl phosphate + 5-amino-6-(D-ribitylamino)uracil = 6,7-dimethyl-8-(1-D-ribityl)lumazine + phosphate + 2 H2O + H(+). It participates in cofactor biosynthesis; riboflavin biosynthesis; riboflavin from 2-hydroxy-3-oxobutyl phosphate and 5-amino-6-(D-ribitylamino)uracil: step 1/2. In terms of biological role, catalyzes the formation of 6,7-dimethyl-8-ribityllumazine by condensation of 5-amino-6-(D-ribitylamino)uracil with 3,4-dihydroxy-2-butanone 4-phosphate. This is the penultimate step in the biosynthesis of riboflavin. This Paraburkholderia phymatum (strain DSM 17167 / CIP 108236 / LMG 21445 / STM815) (Burkholderia phymatum) protein is 6,7-dimethyl-8-ribityllumazine synthase.